Reading from the N-terminus, the 418-residue chain is Glutamyl-tRNA reductase (418 aa).

Substrate contacts are provided by residues 49–52, Ser-107, 112–114, and Gln-118; these read TCNR and EPQ. Residue Cys-50 is the Nucleophile of the active site. 187–192 serves as a coordination point for NADP(+); it reads GAGETI.

The protein belongs to the glutamyl-tRNA reductase family. As to quaternary structure, homodimer.

It carries out the reaction (S)-4-amino-5-oxopentanoate + tRNA(Glu) + NADP(+) = L-glutamyl-tRNA(Glu) + NADPH + H(+). It functions in the pathway porphyrin-containing compound metabolism; protoporphyrin-IX biosynthesis; 5-aminolevulinate from L-glutamyl-tRNA(Glu): step 1/2. Its function is as follows. Catalyzes the NADPH-dependent reduction of glutamyl-tRNA(Glu) to glutamate 1-semialdehyde (GSA). This Vibrio campbellii (strain ATCC BAA-1116) protein is Glutamyl-tRNA reductase.